The sequence spans 193 residues: Small ribosomal subunit protein eS7 (193 aa).

This sequence belongs to the eukaryotic ribosomal protein eS7 family.

This is Small ribosomal subunit protein eS7 (rps7) from Dictyostelium discoideum (Social amoeba).